The following is a 453-amino-acid chain: Jacalin-related lectin 40 (453 aa).

3 Jacalin-type lectin domains span residues 1–142 (MAQK…YFTT), 154–296 (HIKL…YFSS), and 306–449 (PEKL…YVVP). At Ala-2 the chain carries N-acetylalanine.

Belongs to the jacalin lectin family. As to expression, expressed in roots.

In Arabidopsis thaliana (Mouse-ear cress), this protein is Jacalin-related lectin 40 (JAL40).